Reading from the N-terminus, the 252-residue chain is Imidazole glycerol phosphate synthase subunit HisF (252 aa).

Residues Asp-11 and Asp-130 contribute to the active site.

The protein belongs to the HisA/HisF family. Heterodimer of HisH and HisF.

The protein resides in the cytoplasm. The catalysed reaction is 5-[(5-phospho-1-deoxy-D-ribulos-1-ylimino)methylamino]-1-(5-phospho-beta-D-ribosyl)imidazole-4-carboxamide + L-glutamine = D-erythro-1-(imidazol-4-yl)glycerol 3-phosphate + 5-amino-1-(5-phospho-beta-D-ribosyl)imidazole-4-carboxamide + L-glutamate + H(+). It functions in the pathway amino-acid biosynthesis; L-histidine biosynthesis; L-histidine from 5-phospho-alpha-D-ribose 1-diphosphate: step 5/9. Functionally, IGPS catalyzes the conversion of PRFAR and glutamine to IGP, AICAR and glutamate. The HisF subunit catalyzes the cyclization activity that produces IGP and AICAR from PRFAR using the ammonia provided by the HisH subunit. The protein is Imidazole glycerol phosphate synthase subunit HisF of Bacillus cereus (strain G9842).